We begin with the raw amino-acid sequence, 182 residues long: Crossover junction endodeoxyribonuclease RuvC (182 aa).

Active-site residues include D7, E69, and D141. 3 residues coordinate Mg(2+): D7, E69, and D141.

This sequence belongs to the RuvC family. In terms of assembly, homodimer which binds Holliday junction (HJ) DNA. The HJ becomes 2-fold symmetrical on binding to RuvC with unstacked arms; it has a different conformation from HJ DNA in complex with RuvA. In the full resolvosome a probable DNA-RuvA(4)-RuvB(12)-RuvC(2) complex forms which resolves the HJ. It depends on Mg(2+) as a cofactor.

The protein localises to the cytoplasm. The catalysed reaction is Endonucleolytic cleavage at a junction such as a reciprocal single-stranded crossover between two homologous DNA duplexes (Holliday junction).. In terms of biological role, the RuvA-RuvB-RuvC complex processes Holliday junction (HJ) DNA during genetic recombination and DNA repair. Endonuclease that resolves HJ intermediates. Cleaves cruciform DNA by making single-stranded nicks across the HJ at symmetrical positions within the homologous arms, yielding a 5'-phosphate and a 3'-hydroxyl group; requires a central core of homology in the junction. The consensus cleavage sequence is 5'-(A/T)TT(C/G)-3'. Cleavage occurs on the 3'-side of the TT dinucleotide at the point of strand exchange. HJ branch migration catalyzed by RuvA-RuvB allows RuvC to scan DNA until it finds its consensus sequence, where it cleaves and resolves the cruciform DNA. This is Crossover junction endodeoxyribonuclease RuvC from Polaromonas naphthalenivorans (strain CJ2).